The chain runs to 36 residues: Photosystem II reaction center protein Y (36 aa).

At 1–4 (MDTR) the chain is on the lumenal side. The helical transmembrane segment at 5-23 (LLVIAAPVLVAASWALFNI) threads the bilayer. Topologically, residues 24–36 (GRLAIQQIQRLSR) are stromal.

It belongs to the PsbY family. PSII is composed of 1 copy each of membrane proteins PsbA, PsbB, PsbC, PsbD, PsbE, PsbF, PsbH, PsbI, PsbJ, PsbK, PsbL, PsbM, PsbT, PsbX, PsbY, PsbZ, Psb30/Ycf12, at least 3 peripheral proteins of the oxygen-evolving complex and a large number of cofactors. It forms dimeric complexes.

It is found in the plastid. It localises to the chloroplast thylakoid membrane. In terms of biological role, loosely associated component of the core of photosystem II (PSII), it is not always seen in crystals. PSII is a light-driven water plastoquinone oxidoreductase, using light energy to abstract electrons from H(2)O, generating a proton gradient subsequently used for ATP formation. The polypeptide is Photosystem II reaction center protein Y (Thalassiosira pseudonana (Marine diatom)).